A 265-amino-acid polypeptide reads, in one-letter code: uncharacterized protein (265 aa).

The N-terminal stretch at 1 to 23 (MNYFRILYCSVLLFFSFFSCTSA) is a signal peptide. The NodB homology domain occupies 67-248 (KEIYLTFDNG…TLKQQGYTFK (182 aa)).

The protein belongs to the polysaccharide deacetylase family.

This is an uncharacterized protein from Geobacillus stearothermophilus (Bacillus stearothermophilus).